A 615-amino-acid chain; its full sequence is Increased rDNA silencing protein 4 (615 aa).

4 disordered regions span residues 38–135 (SNEV…SSHS), 152–260 (LLGI…NRSQ), 277–304 (PSIA…NYSS), and 323–445 (KPKH…NEDK). Over residues 50–65 (VSRNPQTRLSEPSLQK) the composition is skewed to polar residues. 2 stretches are compositionally biased toward low complexity: residues 121 to 135 (HSQS…SSHS) and 157 to 168 (SRSSSRNGSNES). Residue S180 is modified to Phosphoserine. Positions 184–198 (LLTSFSSGRRLSSSS) are enriched in low complexity. The segment covering 248–260 (NPDTSDVISNRSQ) has biased composition (polar residues). Over residues 281-290 (SSNTTTTTSN) the composition is skewed to low complexity. Over residues 365–377 (ENDHASSLHEGNL) the composition is skewed to basic and acidic residues. Acidic residues predominate over residues 389–402 (DVYDDTDSDSESDQ). Basic residues predominate over residues 409–438 (KPRKRDRIKRKIRNSANKTAHHRPIHRTRD). The EH domain maps to 460 to 571 (ERKRYESMWV…QCVWDSVDRY (112 aa)).

The protein belongs to the IRS4 family. In terms of assembly, interacts with INP51.

Functionally, with TAX4, acts as a positive regulator of INP51 activity and phosphatidylinositol 4,5-bisphosphate turnover. Negatively regulates signaling through the cell integrity pathway, including the MAP kinase SLT2. Also seems to be involved in rDNA silencing. The protein is Increased rDNA silencing protein 4 (IRS4) of Saccharomyces cerevisiae (strain ATCC 204508 / S288c) (Baker's yeast).